Here is a 600-residue protein sequence, read N- to C-terminus: Dihydroxy-acid dehydratase (600 aa).

Position 82 (Asp-82) interacts with Mg(2+). Residue Cys-123 coordinates [2Fe-2S] cluster. The Mg(2+) site is built by Asp-124 and Lys-125. Lys-125 bears the N6-carboxylysine mark. Cys-192 is a [2Fe-2S] cluster binding site. Glu-489 serves as a coordination point for Mg(2+). Ser-515 serves as the catalytic Proton acceptor.

It belongs to the IlvD/Edd family. In terms of assembly, homodimer. The cofactor is [2Fe-2S] cluster. Mg(2+) serves as cofactor.

It carries out the reaction (2R)-2,3-dihydroxy-3-methylbutanoate = 3-methyl-2-oxobutanoate + H2O. The catalysed reaction is (2R,3R)-2,3-dihydroxy-3-methylpentanoate = (S)-3-methyl-2-oxopentanoate + H2O. It participates in amino-acid biosynthesis; L-isoleucine biosynthesis; L-isoleucine from 2-oxobutanoate: step 3/4. It functions in the pathway amino-acid biosynthesis; L-valine biosynthesis; L-valine from pyruvate: step 3/4. In terms of biological role, functions in the biosynthesis of branched-chain amino acids. Catalyzes the dehydration of (2R,3R)-2,3-dihydroxy-3-methylpentanoate (2,3-dihydroxy-3-methylvalerate) into 2-oxo-3-methylpentanoate (2-oxo-3-methylvalerate) and of (2R)-2,3-dihydroxy-3-methylbutanoate (2,3-dihydroxyisovalerate) into 2-oxo-3-methylbutanoate (2-oxoisovalerate), the penultimate precursor to L-isoleucine and L-valine, respectively. The polypeptide is Dihydroxy-acid dehydratase (Phocaeicola vulgatus (strain ATCC 8482 / DSM 1447 / JCM 5826 / CCUG 4940 / NBRC 14291 / NCTC 11154) (Bacteroides vulgatus)).